Consider the following 218-residue polypeptide: Zinc metalloproteinase-disintegrin-like bothrojarin-2 (218 aa).

A Disintegrin domain is found at 14 to 100 (PPVCGNELLE…QCPTDDFHKN (87 aa)). 5 residues coordinate Ca(2+): Val-16, Leu-21, Glu-23, Glu-26, and Asp-29. 10 disulfide bridges follow: Cys-28/Cys-46, Cys-30/Cys-41, Cys-40/Cys-63, Cys-54/Cys-60, Cys-59/Cys-85, Cys-72/Cys-92, Cys-79/Cys-111, Cys-104/Cys-116, Cys-123/Cys-173, and Cys-151/Cys-161. Residues 78–80 (ECD) carry the D/ECD-tripeptide motif.

It belongs to the venom metalloproteinase (M12B) family. P-III subfamily. P-IIIa sub-subfamily. Monomer. Zn(2+) is required as a cofactor. In terms of processing, glycosylated. In terms of tissue distribution, expressed by the venom gland.

It localises to the secreted. Functionally, the hemorrhagic metalloproteinase-disintegrin-like bothrojarin-1 is a potent inhibitor of collagen-induced platelet aggregation by blockage of alpha-2/beta-1 (ITGA2/ITGB1) integrin. It does not present any fibrinogen-clotting activity. The polypeptide is Zinc metalloproteinase-disintegrin-like bothrojarin-2 (Bothrops jararaca (Jararaca)).